The primary structure comprises 80 residues: Exodeoxyribonuclease 7 small subunit (80 aa).

The protein belongs to the XseB family. Heterooligomer composed of large and small subunits.

The protein resides in the cytoplasm. The enzyme catalyses Exonucleolytic cleavage in either 5'- to 3'- or 3'- to 5'-direction to yield nucleoside 5'-phosphates.. In terms of biological role, bidirectionally degrades single-stranded DNA into large acid-insoluble oligonucleotides, which are then degraded further into small acid-soluble oligonucleotides. This is Exodeoxyribonuclease 7 small subunit from Vibrio campbellii (strain ATCC BAA-1116).